The chain runs to 597 residues: Probable HECT-type ubiquitin ligase-interacting protein creD (597 aa).

Disordered regions lie at residues 375 to 398 and 432 to 499; these read ELDPNGYRTPGPGSGPGTPFGTLS and LNIT…MATP. Over residues 443–455 the composition is skewed to basic and acidic residues; the sequence is TDHESQNDSEHRR. The span at 465 to 481 shows a compositional bias: low complexity; sequence PSSGSNSHSPSSPVLSR. A compositionally biased stretch (basic and acidic residues) spans 482-492; it reads RPSDEVDHEHV.

It belongs to the arrestin family. As to quaternary structure, interacts with hulA.

In terms of biological role, component of the regulatory network controlling carbon source utilization through ubiquitination and deubiquitination involving creA, creB, creC, creD and acrB. May be involved in signaling by recognizing appropriately phosphorylated substrates via its arrestin domains and then recruit a HECT-type ubiquitin ligase such as hulA, leading to ubiquitination of the substrate, providing a link between ubiquitination and phosphorylation in protein regulation and stability. This Aspergillus oryzae (strain ATCC 42149 / RIB 40) (Yellow koji mold) protein is Probable HECT-type ubiquitin ligase-interacting protein creD (creD).